The primary structure comprises 388 residues: tRNA (guanine(26)-N(2))-dimethyltransferase (388 aa).

One can recognise a Trm1 methyltransferase domain in the interval 7-381; the sequence is KTVEEGLTKI…APLKKIKEII (375 aa). The S-adenosyl-L-methionine site is built by R40, R70, D88, D115, and A116. Zn(2+)-binding residues include C248, C251, C268, and C271.

This sequence belongs to the class I-like SAM-binding methyltransferase superfamily. Trm1 family.

The catalysed reaction is guanosine(26) in tRNA + 2 S-adenosyl-L-methionine = N(2)-dimethylguanosine(26) in tRNA + 2 S-adenosyl-L-homocysteine + 2 H(+). Functionally, dimethylates a single guanine residue at position 26 of a number of tRNAs using S-adenosyl-L-methionine as donor of the methyl groups. The chain is tRNA (guanine(26)-N(2))-dimethyltransferase from Methanobrevibacter smithii (strain ATCC 35061 / DSM 861 / OCM 144 / PS).